Here is a 390-residue protein sequence, read N- to C-terminus: Phosphoglycerate kinase (390 aa).

Residues aspartate 21–asparagine 23, arginine 36, histidine 59–arginine 62, arginine 114, and arginine 147 contribute to the substrate site. Residues lysine 198, glutamate 314, and glycine 340–threonine 343 contribute to the ATP site.

The protein belongs to the phosphoglycerate kinase family. As to quaternary structure, monomer.

It is found in the cytoplasm. It carries out the reaction (2R)-3-phosphoglycerate + ATP = (2R)-3-phospho-glyceroyl phosphate + ADP. It functions in the pathway carbohydrate degradation; glycolysis; pyruvate from D-glyceraldehyde 3-phosphate: step 2/5. This is Phosphoglycerate kinase from Buchnera aphidicola subsp. Acyrthosiphon pisum (strain 5A).